Here is a 225-residue protein sequence, read N- to C-terminus: Ureidoacrylate amidohydrolase RutB (225 aa).

The active-site Proton acceptor is Asp-22. Lys-131 is a catalytic residue. Cys-164 acts as the Nucleophile in catalysis.

It belongs to the isochorismatase family. RutB subfamily.

It carries out the reaction (Z)-3-ureidoacrylate + H2O + H(+) = (Z)-3-aminoacrylate + NH4(+) + CO2. The catalysed reaction is (Z)-3-ureidoacrylate + H2O = (Z)-3-aminoacrylate + carbamate + H(+). The enzyme catalyses (Z)-2-methylureidoacrylate + H2O + H(+) = (Z)-2-methylaminoacrylate + NH4(+) + CO2. In terms of biological role, hydrolyzes ureidoacrylate to form aminoacrylate and carbamate. The carbamate hydrolyzes spontaneously, thereby releasing one of the nitrogen atoms of the pyrimidine ring as ammonia and one of its carbon atoms as CO2. The protein is Ureidoacrylate amidohydrolase RutB of Caulobacter vibrioides (strain ATCC 19089 / CIP 103742 / CB 15) (Caulobacter crescentus).